A 416-amino-acid chain; its full sequence is Choline/ethanolaminephosphotransferase 1 (416 aa).

Residues 1 to 20 (MSGHRSTRKRCGDSHPESPV) are disordered. The residue at position 18 (serine 18) is a Phosphoserine. Threonine 40 is modified (phosphothreonine). Asparagine 86 is a binding site for CDP-choline. Helical transmembrane passes span 89–108 (TIIGLSINICTTILLVFYCP) and 116–133 (LWAYIACACGLFIYQSLD). Position 133 (aspartate 133) interacts with Mg(2+). A glycan (N-linked (GlcNAc...) asparagine) is linked at asparagine 144. Glutamate 151 is a binding site for CDP-choline. Aspartate 154 contacts Mg(2+). Histidine 155 functions as the Proton acceptor in the catalytic mechanism. 8 consecutive transmembrane segments (helical) span residues 156–176 (GCDSLSTVFVVLGTCIAVQLG), 180–199 (DWMFFCCFAGTFMFYCAHWQ), 210–230 (IIDVTEVQIFIIIMHLLAVIG), 246–267 (MKLFPALCTVAGTIFSCTNYFR), 286–306 (VLSPFLHIGSVITLAVMIYKK), 315–334 (HPCLYILTFGFVSAKITNKL), 349–363 (TAFIGPALLFLDQYF), and 368–388 (DEYIVLWIALVFSFFDLIRYC). Aspartate 158 serves as a coordination point for Mg(2+).

It belongs to the CDP-alcohol phosphatidyltransferase class-I family. Homodimer. Requires Mg(2+) as cofactor. The cofactor is Mn(2+).

Its subcellular location is the endoplasmic reticulum membrane. The protein resides in the nucleus membrane. The enzyme catalyses CDP-ethanolamine + a 1,2-diacyl-sn-glycerol = a 1,2-diacyl-sn-glycero-3-phosphoethanolamine + CMP + H(+). The catalysed reaction is CDP-choline + a 1,2-diacyl-sn-glycerol = a 1,2-diacyl-sn-glycero-3-phosphocholine + CMP + H(+). It catalyses the reaction 1-O-alkyl-2-acyl-sn-glycerol + CDP-choline = a 1-O-alkyl-2-acyl-sn-glycero-3-phosphocholine + CMP + H(+). It carries out the reaction a 1-O-(1Z-alkenyl)-2-acyl-sn-glycerol + CDP-choline = a 1-O-(1Z-alkenyl)-2-acyl-sn-glycero-3-phosphocholine + CMP + H(+). The enzyme catalyses 1,2-dioctanoyl-sn-glycerol + CDP-choline = 1,2-dioctanoyl-sn-glycero-3-phosphocholine + CMP + H(+). The catalysed reaction is 1,2-didecanoyl-sn-glycerol + CDP-choline = 1,2-didecanoyl-sn-glycero-3-phosphocholine + CMP + H(+). It catalyses the reaction CDP-choline + 1,2-di-(9Z-octadecenoyl)-sn-glycerol = 1,2-di-(9Z-octadecenoyl)-sn-glycero-3-phosphocholine + CMP + H(+). It carries out the reaction 1-hexadecanoyl-2-(9Z-octadecenoyl)-sn-glycerol + CDP-choline = 1-hexadecanoyl-2-(9Z-octadecenoyl)-sn-glycero-3-phosphocholine + CMP + H(+). The enzyme catalyses CDP-ethanolamine + 1,2-di-(9Z-octadecenoyl)-sn-glycerol = 1,2-di-(9Z-octadecenoyl)-sn-glycero-3-phosphoethanolamine + CMP + H(+). The catalysed reaction is 1-hexadecanoyl-2-(9Z-octadecenoyl)-sn-glycerol + CDP-ethanolamine = 1-hexadecanoyl-2-(9Z-octadecenoyl)-sn-glycero-3-phosphoethanolamine + CMP + H(+). It catalyses the reaction 1-hexadecanoyl-2-(4Z,7Z,10Z,13Z,16Z,19Z-docosahexaenoyl)-sn-glycerol + CDP-choline = 1-hexadecanoyl-2-(4Z,7Z,10Z,13Z,16Z,19Z-docosahexaenoyl)-sn-glycero-3-phosphocholine + CMP + H(+). It carries out the reaction 1,2-di-(9Z-hexadecenoyl)-sn-glycerol + CDP-choline = 1,2-di-(9Z-hexadecenoyl)-sn-glycero-3-phosphocholine + CMP + H(+). The enzyme catalyses 1,2-di-(9Z-hexadecenoyl)-sn-glycerol + CDP-ethanolamine = 1,2-di-(9Z-hexadecenoyl)-sn-glycero-3-phosphoethanolamine + CMP + H(+). The catalysed reaction is 1-O-hexadecyl-2-acetyl-sn-glycerol + CDP-choline = 1-O-hexadecyl-2-acetyl-sn-glycero-3-phosphocholine + CMP + H(+). It catalyses the reaction 1-O-hexadecyl-2-(5Z,8Z,11Z,14Z-eicosatetraenoyl)-sn-glycerol + CDP-choline = 1-O-hexadecyl-2-(5Z,8Z,11Z,14Z)-eicosatetraenoyl-sn-glycero-3-phosphocholine + CMP + H(+). Its pathway is phospholipid metabolism; phosphatidylethanolamine biosynthesis; phosphatidylethanolamine from ethanolamine: step 3/3. The protein operates within phospholipid metabolism; phosphatidylcholine biosynthesis; phosphatidylcholine from phosphocholine: step 2/2. In terms of biological role, catalyzes both phosphatidylcholine and phosphatidylethanolamine biosynthesis from CDP-choline and CDP-ethanolamine, respectively. Involved in protein-dependent process of phospholipid transport to distribute phosphatidyl choline to the lumenal surface. Has a higher cholinephosphotransferase activity than ethanolaminephosphotransferase activity. The protein is Choline/ethanolaminephosphotransferase 1 of Rattus norvegicus (Rat).